We begin with the raw amino-acid sequence, 689 residues long: DNA ligase (689 aa).

Residues 40-44 (DSEYD), 89-90 (SL), and glutamate 121 each bind NAD(+). Catalysis depends on lysine 123, which acts as the N6-AMP-lysine intermediate. The NAD(+) site is built by arginine 144, glutamate 179, lysine 295, and lysine 319. Zn(2+) is bound by residues cysteine 413, cysteine 416, cysteine 431, and cysteine 437. A BRCT domain is found at 610-689 (REQSSLTDKI…EEWLTLIKNV (80 aa)).

Belongs to the NAD-dependent DNA ligase family. LigA subfamily. It depends on Mg(2+) as a cofactor. Requires Mn(2+) as cofactor.

It catalyses the reaction NAD(+) + (deoxyribonucleotide)n-3'-hydroxyl + 5'-phospho-(deoxyribonucleotide)m = (deoxyribonucleotide)n+m + AMP + beta-nicotinamide D-nucleotide.. Functionally, DNA ligase that catalyzes the formation of phosphodiester linkages between 5'-phosphoryl and 3'-hydroxyl groups in double-stranded DNA using NAD as a coenzyme and as the energy source for the reaction. It is essential for DNA replication and repair of damaged DNA. The chain is DNA ligase from Rickettsia massiliae (strain Mtu5).